A 74-amino-acid chain; its full sequence is Translational regulator CsrA (74 aa).

This sequence belongs to the CsrA/RsmA family. Homodimer; the beta-strands of each monomer intercalate to form a hydrophobic core, while the alpha-helices form wings that extend away from the core.

Its subcellular location is the cytoplasm. A translational regulator that binds mRNA to regulate translation initiation and/or mRNA stability. Usually binds in the 5'-UTR at or near the Shine-Dalgarno sequence preventing ribosome-binding, thus repressing translation. Its main target seems to be the major flagellin gene, while its function is anatagonized by FliW. The polypeptide is Translational regulator CsrA (Bacillus velezensis (strain DSM 23117 / BGSC 10A6 / LMG 26770 / FZB42) (Bacillus amyloliquefaciens subsp. plantarum)).